Reading from the N-terminus, the 979-residue chain is UPF0182 protein Mb0065 (979 aa).

Transmembrane regions (helical) follow at residues L19–V41, L63–Y85, L114–V136, W174–L196, A208–L230, L261–L280, and I285–L307. A disordered region spans residues G898–A948. Over residues V902 to S912 the composition is skewed to low complexity. Positions A913–P946 are enriched in pro residues.

The protein belongs to the UPF0182 family.

The protein resides in the cell membrane. The chain is UPF0182 protein Mb0065 from Mycobacterium bovis (strain ATCC BAA-935 / AF2122/97).